A 275-amino-acid chain; its full sequence is UDP-Gal:alpha-D-GlcNAc-diphosphoundecaprenol beta-1,3-galactosyltransferase (275 aa).

The protein belongs to the glycosyltransferase 2 family. The cofactor is Mn(2+).

It is found in the cell inner membrane. It catalyses the reaction N-acetyl-alpha-D-glucosaminyl-di-trans,octa-cis-undecaprenyl diphosphate + UDP-alpha-D-galactose = beta-D-Gal-(1-&gt;3)-alpha-D-GlcNAc-di-trans,octa-cis-undecaprenyl diphosphate + UDP + H(+). The protein operates within bacterial outer membrane biogenesis; LPS O-antigen biosynthesis. Its function is as follows. Catalyzes the addition of Gal, the second sugar moiety of the O7-antigen repeating unit, to GlcNAc-pyrophosphate-undecaprenol. This Escherichia coli protein is UDP-Gal:alpha-D-GlcNAc-diphosphoundecaprenol beta-1,3-galactosyltransferase (wbbD).